Reading from the N-terminus, the 51-residue chain is Lantibiotic streptococcin A-FF22 (51 aa).

A propeptide spanning residues 1-25 is cleaved from the precursor; sequence MEKNNEVINSIQEVSLEELDQIIGA. 2 consecutive cross-links (beta-methyllanthionine (Thr-Cys)) follow at residues 33–38 and 42–50; these read TISHEC and TWAFLATCC. A cross-link (lanthionine (Ser-Cys)) is located at residues 35–49; the sequence is SHECHLNTWAFLATC. Position 48 is a 2,3-didehydrobutyrine (threonine 48).

Belongs to the type A lantibiotic family. Maturation of lantibiotics involves the enzymatic conversion of Thr, and Ser into dehydrated AA and the formation of thioether bonds with cysteine. This is followed by membrane translocation and cleavage of the modified precursor.

The protein resides in the secreted. The protein localises to the cell surface. Lanthionine-containing peptide antibiotic (lantibiotic) active on certain Gram-positive bacteria. The bactericidal activity of lantibiotics is based on depolarization of energized bacterial cytoplasmic membranes, initiated by the formation of aqueous transmembrane pores. The chain is Lantibiotic streptococcin A-FF22 (scnA) from Streptococcus pyogenes.